The chain runs to 488 residues: Glutamyl-tRNA(Gln) amidotransferase subunit A (488 aa).

Catalysis depends on charge relay system residues K77 and S152. S176 (acyl-ester intermediate) is an active-site residue.

Belongs to the amidase family. GatA subfamily. In terms of assembly, heterotrimer of A, B and C subunits.

The enzyme catalyses L-glutamyl-tRNA(Gln) + L-glutamine + ATP + H2O = L-glutaminyl-tRNA(Gln) + L-glutamate + ADP + phosphate + H(+). Allows the formation of correctly charged Gln-tRNA(Gln) through the transamidation of misacylated Glu-tRNA(Gln) in organisms which lack glutaminyl-tRNA synthetase. The reaction takes place in the presence of glutamine and ATP through an activated gamma-phospho-Glu-tRNA(Gln). This chain is Glutamyl-tRNA(Gln) amidotransferase subunit A, found in Streptococcus uberis (strain ATCC BAA-854 / 0140J).